A 245-amino-acid chain; its full sequence is MNGRADFREPNAEVPRPIPHIGPDYIPTEEERRVFAECNDESFWFRSVPLAATSMLITQGLISKGILSSHPKYGSIPKLILACIMGYFAGKLSYVKTCQEKFKKLENSPLGEALRSGQARRSSPPGHYYQKSKYDSSVSGQSSFVTSPAADNIEMLPHYEPIPFSSSMNESAPTGITDHIVQGPDPNLEESPKRKNITYEELRNKNRESYEVSLTQKTDPSVRPMHERVPKKEVKVNKYGDTWDE.

The OCIA domain maps to 1-112; the sequence is MNGRADFREP…KKLENSPLGE (112 aa). Phosphoserine is present on residues S108, S116, S123, and S191. Disordered regions lie at residues 111-141 and 169-245; these read GEALRSGQARRSSPPGHYYQKSKYDSSVSGQ and NESA…TWDE. 2 stretches are compositionally biased toward basic and acidic residues: residues 190-210 and 224-238; these read ESPKRKNITYEELRNKNRESY and PMHERVPKKEVKVNK.

The protein belongs to the OCIAD1 family. Interacts with OCIAD2. Interacts with STAT3. Isoform 1 is highly expressed in many tissues, including testis, brain, placenta, ovary, prostate and mammary gland. Isoform 2 expression is restricted to the central nervous system including brain, cerebellum and spinal cord.

It is found in the endosome. Functionally, maintains stem cell potency. Increases STAT3 phosphorylation and controls ERK phosphorylation. May act as a scaffold, increasing STAT3 recruitment onto endosomes. Involved in integrin-mediated cancer cell adhesion and colony formation in ovarian cancer. This chain is OCIA domain-containing protein 1, found in Homo sapiens (Human).